Reading from the N-terminus, the 349-residue chain is tRNA N6-adenosine threonylcarbamoyltransferase (349 aa).

Histidine 117, histidine 121, and tyrosine 138 together coordinate Fe cation. Substrate is bound by residues 138-142 (YVAGG), aspartate 170, aspartate 191, and asparagine 271. Aspartate 299 serves as a coordination point for Fe cation.

This sequence belongs to the KAE1 / TsaD family. It depends on Fe(2+) as a cofactor.

The protein resides in the cytoplasm. The enzyme catalyses L-threonylcarbamoyladenylate + adenosine(37) in tRNA = N(6)-L-threonylcarbamoyladenosine(37) in tRNA + AMP + H(+). In terms of biological role, required for the formation of a threonylcarbamoyl group on adenosine at position 37 (t(6)A37) in tRNAs that read codons beginning with adenine. Is probably involved in the transfer of the threonylcarbamoyl moiety of threonylcarbamoyl-AMP (TC-AMP) to the N6 group of A37. The chain is tRNA N6-adenosine threonylcarbamoyltransferase from Aeropyrum pernix (strain ATCC 700893 / DSM 11879 / JCM 9820 / NBRC 100138 / K1).